Here is a 316-residue protein sequence, read N- to C-terminus: tRNA dimethylallyltransferase (316 aa).

17–24 (GPTASGKT) is an ATP binding site. Substrate is bound at residue 19 to 24 (TASGKT). Interaction with substrate tRNA regions lie at residues 42 to 45 (DSAL), 166 to 170 (QRLSR), and 247 to 252 (RCVGYR).

It belongs to the IPP transferase family. In terms of assembly, monomer. Mg(2+) is required as a cofactor.

The enzyme catalyses adenosine(37) in tRNA + dimethylallyl diphosphate = N(6)-dimethylallyladenosine(37) in tRNA + diphosphate. Its function is as follows. Catalyzes the transfer of a dimethylallyl group onto the adenine at position 37 in tRNAs that read codons beginning with uridine, leading to the formation of N6-(dimethylallyl)adenosine (i(6)A). The polypeptide is tRNA dimethylallyltransferase (Citrobacter koseri (strain ATCC BAA-895 / CDC 4225-83 / SGSC4696)).